The sequence spans 381 residues: Glycerate 2-kinase (381 aa).

Belongs to the glycerate kinase type-1 family.

It catalyses the reaction (R)-glycerate + ATP = (2R)-2-phosphoglycerate + ADP + H(+). Catalyzes the transfer of the phosphate group from adenosine triphosphate (ATP) to (R)-glycerate to form (2R)-2-phosphoglycerate, an enzymatic step in (L)-glucarate/galactarate catabolic pathway. This Escherichia coli (strain K12) protein is Glycerate 2-kinase (garK).